Here is a 426-residue protein sequence, read N- to C-terminus: 3-phosphoshikimate 1-carboxyvinyltransferase (426 aa).

K22, S23, and R27 together coordinate 3-phosphoshikimate. K22 is a phosphoenolpyruvate binding site. Residues G96 and R124 each contribute to the phosphoenolpyruvate site. Residues S170 and S171 each contribute to the 3-phosphoshikimate site. Phosphoenolpyruvate is bound at residue Q172. 3-phosphoshikimate contacts are provided by S198, D314, N337, and K341. The Proton acceptor role is filled by D314. Phosphoenolpyruvate-binding residues include R345, R387, and K412.

This sequence belongs to the EPSP synthase family. As to quaternary structure, homotetramer.

The protein localises to the cytoplasm. The catalysed reaction is 3-phosphoshikimate + phosphoenolpyruvate = 5-O-(1-carboxyvinyl)-3-phosphoshikimate + phosphate. Its pathway is metabolic intermediate biosynthesis; chorismate biosynthesis; chorismate from D-erythrose 4-phosphate and phosphoenolpyruvate: step 6/7. Functionally, catalyzes the transfer of the enolpyruvyl moiety of phosphoenolpyruvate (PEP) to the 5-hydroxyl of shikimate-3-phosphate (S3P) to produce enolpyruvyl shikimate-3-phosphate and inorganic phosphate. The protein is 3-phosphoshikimate 1-carboxyvinyltransferase of Vibrio cholerae serotype O1 (strain ATCC 39315 / El Tor Inaba N16961).